A 384-amino-acid polypeptide reads, in one-letter code: MENTDELVSIELPAPASWKKLFYPKRAGTPRKTEIVFVAPTGEEISSRKQLEQYLKAHPGNPVISEFEWTTGETPRRSSRISQKVKATTPTPDKEPLLKKRRSSLTKKDNKEAAEKNEEAAVKENMDVDKDGKTENAEAEKEKEKEGVTEIAEAEKENNEGEKTEAEKVNKEGEKTEAGKEGQTEIAEAEKEKEGEKAEAENKEAEVVRDKKESMEVDTSELEKKAGSGEGAEEPSKVEGLKDTEMKEAQEVVTEADVEKKPAEEKTENKGSVTTEANGEQNVTLGEPNLDADAEADKGKESKEYDEKTTEAEANKENDTQESDEKKTEAAANKENETQESDVKKTEAAVAEEKSNDMKAEDTNRSLEANQVQQQQGAAASVSC.

One can recognise an MBD domain in the interval 4–74 (TDELVSIELP…SEFEWTTGET (71 aa)). A disordered region spans residues 65-384 (SEFEWTTGET…QQGAAASVSC (320 aa)). Residues 80 to 91 (RISQKVKATTPT) are compositionally biased toward polar residues. Residues 100–224 (KRRSSLTKKD…MEVDTSELEK (125 aa)) adopt a coiled-coil conformation. Basic and acidic residues-rich tracts occupy residues 106–227 (TKKD…KKAG), 234–250 (EPSKVEGLKDTEMKEAQ), and 257–269 (DVEKKPAEEKTEN). Positions 270–284 (KGSVTTEANGEQNVT) are enriched in polar residues. The span at 295-365 (EADKGKESKE…NDMKAEDTNR (71 aa)) shows a compositional bias: basic and acidic residues. The stretch at 310–356 (TEAEANKENDTQESDEKKTEAAANKENETQESDVKKTEAAVAEEKSN) forms a coiled coil. Phosphoserine is present on Ser323. Low complexity predominate over residues 369–384 (ANQVQQQQGAAASVSC).

As to expression, expressed in leaves, buds, flowers, stems and siliques.

Its subcellular location is the nucleus. Probable transcriptional regulator. Required for nucleolar dominance that consist in the silencing of rRNA genes inherited from one progenitor in genetic hybrids. The chain is Methyl-CpG-binding domain-containing protein 10 (MBD10) from Arabidopsis thaliana (Mouse-ear cress).